The primary structure comprises 379 residues: UDP-4-amino-4-deoxy-L-arabinose--oxoglutarate aminotransferase (379 aa).

Lys182 bears the N6-(pyridoxal phosphate)lysine mark.

Belongs to the DegT/DnrJ/EryC1 family. ArnB subfamily. In terms of assembly, homodimer. It depends on pyridoxal 5'-phosphate as a cofactor.

It carries out the reaction UDP-4-amino-4-deoxy-beta-L-arabinose + 2-oxoglutarate = UDP-beta-L-threo-pentopyranos-4-ulose + L-glutamate. It functions in the pathway nucleotide-sugar biosynthesis; UDP-4-deoxy-4-formamido-beta-L-arabinose biosynthesis; UDP-4-deoxy-4-formamido-beta-L-arabinose from UDP-alpha-D-glucuronate: step 2/3. Its pathway is bacterial outer membrane biogenesis; lipopolysaccharide biosynthesis. Its function is as follows. Catalyzes the conversion of UDP-4-keto-arabinose (UDP-Ara4O) to UDP-4-amino-4-deoxy-L-arabinose (UDP-L-Ara4N). The modified arabinose is attached to lipid A and is required for resistance to polymyxin and cationic antimicrobial peptides. The polypeptide is UDP-4-amino-4-deoxy-L-arabinose--oxoglutarate aminotransferase (Shigella boydii serotype 4 (strain Sb227)).